Consider the following 378-residue polypeptide: Glutamate 5-kinase (378 aa).

An ATP-binding site is contributed by Lys-14. Substrate contacts are provided by Ser-54, Asp-141, and Asn-153. 173-174 (SD) is a binding site for ATP. The PUA domain maps to 279–356 (AGRLTVDAGA…DEISAILGYD (78 aa)).

It belongs to the glutamate 5-kinase family.

The protein localises to the cytoplasm. The enzyme catalyses L-glutamate + ATP = L-glutamyl 5-phosphate + ADP. Its pathway is amino-acid biosynthesis; L-proline biosynthesis; L-glutamate 5-semialdehyde from L-glutamate: step 1/2. Its function is as follows. Catalyzes the transfer of a phosphate group to glutamate to form L-glutamate 5-phosphate. This is Glutamate 5-kinase from Brucella abortus (strain S19).